Reading from the N-terminus, the 751-residue chain is Serine/threonine-protein kinase-like protein CCR4 (751 aa).

Positions 1–31 (MALTISISCFSSYFVSLLLLVLSSFSFVCFS) are cleaved as a signal peptide. Topologically, residues 32-366 (LSTVSISHIS…NKTWSRRNIA (335 aa)) are extracellular. Residues Asn42, Asn51, Asn98, Asn243, Asn254, Asn283, and Asn357 are each glycosylated (N-linked (GlcNAc...) asparagine). A helical membrane pass occupies residues 367–387 (FLVVGCVGTFSLLLVISFLIF). The Cytoplasmic portion of the chain corresponds to 388–751 (KSHCRCRVHD…TETVSRSNTY (364 aa)). The region spanning 443-733 (FSVRFHLGIG…EVVSKLESAL (291 aa)) is the Protein kinase domain. Residues 449 to 457 (LGIGSFGSV) and Lys471 each bind ATP. The Proton acceptor role is filled by Asp579.

It belongs to the protein kinase superfamily. Ser/Thr protein kinase family. In terms of assembly, homodimer. As to expression, expressed in roots, leaves, especially in trichomes, shoot apical meristems (SAM), and, to a lower extent, in floral buds.

The protein resides in the membrane. The enzyme catalyses L-seryl-[protein] + ATP = O-phospho-L-seryl-[protein] + ADP + H(+). It carries out the reaction L-threonyl-[protein] + ATP = O-phospho-L-threonyl-[protein] + ADP + H(+). The polypeptide is Serine/threonine-protein kinase-like protein CCR4 (CCR4) (Arabidopsis thaliana (Mouse-ear cress)).